The following is an 81-amino-acid chain: Sulfur carrier protein TusA (81 aa).

The active-site Cysteine persulfide intermediate is the Cys-19.

It belongs to the sulfur carrier protein TusA family.

It is found in the cytoplasm. In terms of biological role, sulfur carrier protein which probably makes part of a sulfur-relay system. The sequence is that of Sulfur carrier protein TusA from Shewanella frigidimarina (strain NCIMB 400).